The sequence spans 598 residues: Elongation factor 4 (598 aa).

One can recognise a tr-type G domain in the interval 2-184 (NNIRNFAIIA…AIVAKLPAPQ (183 aa)). GTP contacts are provided by residues 14–19 (DHGKST) and 131–134 (NKVD).

The protein belongs to the TRAFAC class translation factor GTPase superfamily. Classic translation factor GTPase family. LepA subfamily.

It is found in the cell membrane. The enzyme catalyses GTP + H2O = GDP + phosphate + H(+). Functionally, required for accurate and efficient protein synthesis under certain stress conditions. May act as a fidelity factor of the translation reaction, by catalyzing a one-codon backward translocation of tRNAs on improperly translocated ribosomes. Back-translocation proceeds from a post-translocation (POST) complex to a pre-translocation (PRE) complex, thus giving elongation factor G a second chance to translocate the tRNAs correctly. Binds to ribosomes in a GTP-dependent manner. The chain is Elongation factor 4 from Wolbachia sp. subsp. Drosophila simulans (strain wRi).